The primary structure comprises 154 residues: Cytochrome c' (154 aa).

The N-terminal stretch at 1-23 (MKHVLASTAAGLMALGLASSAIA) is a signal peptide. Positions 35, 36, 95, 144, 147, and 148 each coordinate heme c.

In terms of assembly, homodimer. In terms of processing, binds 1 heme c group covalently per subunit.

In terms of biological role, cytochrome c' is the most widely occurring bacterial c-type cytochrome. Cytochromes c' are high-spin proteins and the heme has no sixth ligand. Their exact function is not known. The protein is Cytochrome c' (cycA) of Allochromatium vinosum (strain ATCC 17899 / DSM 180 / NBRC 103801 / NCIMB 10441 / D) (Chromatium vinosum).